The primary structure comprises 328 residues: Cytochrome c biogenesis protein CcsA (328 aa).

8 helical membrane passes run 13–33 (ISFS…LVNL), 46–66 (GIII…IFSG), 73–93 (LYES…ISFF), 101–121 (LNAI…SGLL), 146–166 (MVLG…LLVI), 234–254 (IISL…VWAN), 263–283 (WDPK…YLHI), and 295–315 (AIVA…VNLL).

Belongs to the CcmF/CycK/Ccl1/NrfE/CcsA family. May interact with Ccs1.

It localises to the plastid. Its subcellular location is the chloroplast thylakoid membrane. Functionally, required during biogenesis of c-type cytochromes (cytochrome c6 and cytochrome f) at the step of heme attachment. In Aethionema grandiflorum (Persian stone-cress), this protein is Cytochrome c biogenesis protein CcsA.